Here is a 306-residue protein sequence, read N- to C-terminus: GTP cyclohydrolase FolE2 (306 aa).

It belongs to the GTP cyclohydrolase IV family.

The catalysed reaction is GTP + H2O = 7,8-dihydroneopterin 3'-triphosphate + formate + H(+). It functions in the pathway cofactor biosynthesis; 7,8-dihydroneopterin triphosphate biosynthesis; 7,8-dihydroneopterin triphosphate from GTP: step 1/1. Its function is as follows. Converts GTP to 7,8-dihydroneopterin triphosphate. This chain is GTP cyclohydrolase FolE2, found in Pseudoalteromonas atlantica (strain T6c / ATCC BAA-1087).